A 127-amino-acid chain; its full sequence is Holo-[acyl-carrier-protein] synthase (127 aa).

Residues Asp8 and Glu57 each contribute to the Mg(2+) site.

It belongs to the P-Pant transferase superfamily. AcpS family. It depends on Mg(2+) as a cofactor.

It is found in the cytoplasm. The enzyme catalyses apo-[ACP] + CoA = holo-[ACP] + adenosine 3',5'-bisphosphate + H(+). Transfers the 4'-phosphopantetheine moiety from coenzyme A to a Ser of acyl-carrier-protein. The protein is Holo-[acyl-carrier-protein] synthase of Ruthia magnifica subsp. Calyptogena magnifica.